The chain runs to 310 residues: Aspartate carbamoyltransferase catalytic subunit 1 (310 aa).

Carbamoyl phosphate contacts are provided by R55 and T56. K85 contacts L-aspartate. R106, H134, and Q137 together coordinate carbamoyl phosphate. L-aspartate-binding residues include R167 and R228. 2 residues coordinate carbamoyl phosphate: L266 and P267.

Belongs to the aspartate/ornithine carbamoyltransferase superfamily. ATCase family. In terms of assembly, heterododecamer (2C3:3R2) of six catalytic PyrB chains organized as two trimers (C3), and six regulatory PyrI chains organized as three dimers (R2).

It catalyses the reaction carbamoyl phosphate + L-aspartate = N-carbamoyl-L-aspartate + phosphate + H(+). It functions in the pathway pyrimidine metabolism; UMP biosynthesis via de novo pathway; (S)-dihydroorotate from bicarbonate: step 2/3. Its function is as follows. Catalyzes the condensation of carbamoyl phosphate and aspartate to form carbamoyl aspartate and inorganic phosphate, the committed step in the de novo pyrimidine nucleotide biosynthesis pathway. This Shewanella halifaxensis (strain HAW-EB4) protein is Aspartate carbamoyltransferase catalytic subunit 1.